The sequence spans 199 residues: MLSALRTAGALSTRRLASTQAIASNSEAPKGIATTGTPFLNPSSKAEYALARLDDVMNLAQRGSIWPLTFGLACCAVEMMHFAAPRYDMDRYGVVFRASPRQADLIFVAGTVTNKMAPALRRIYDQMPEAKWVISMGSCANGGGYYHYAYSVLRGCDRVIPVDIYVPGCPPTAEALLYGVLQLQKKIKRKREAQLWYRR.

The transit peptide at 1–16 (MLSALRTAGALSTRRL) directs the protein to the mitochondrion. Residues Cys-74, Cys-75, Cys-139, and Cys-169 each coordinate [4Fe-4S] cluster.

The protein belongs to the complex I 20 kDa subunit family. Complex I is composed of 45 different subunits This is a component of the iron-sulfur (IP) fragment of the enzyme. The cofactor is [4Fe-4S] cluster.

Its subcellular location is the mitochondrion. The catalysed reaction is a ubiquinone + NADH + 5 H(+)(in) = a ubiquinol + NAD(+) + 4 H(+)(out). Its function is as follows. Core subunit of the mitochondrial membrane respiratory chain NADH dehydrogenase (Complex I) that is believed to belong to the minimal assembly required for catalysis. Complex I functions in the transfer of electrons from NADH to the respiratory chain. The immediate electron acceptor for the enzyme is believed to be ubiquinone. This is Probable NADH dehydrogenase [ubiquinone] iron-sulfur protein 7, mitochondrial from Caenorhabditis briggsae.